An 84-amino-acid polypeptide reads, in one-letter code: MYB-like transcription factor TCL1 (84 aa).

The Myb-like domain occupies threonine 36–tryptophan 73.

In terms of tissue distribution, expressed in inflorescences and trichomes of rosette and cauline leaves.

It is found in the nucleus. MYB-type transcription factor involved in trichome cell specification. Acts as a negative regulator of trichome patterning and formation by direct binding to the cis-acting regulatory elements of GL1, thus suppressing the expression of GL1. The chain is MYB-like transcription factor TCL1 (TCL1) from Arabidopsis thaliana (Mouse-ear cress).